We begin with the raw amino-acid sequence, 116 residues long: PTS system cellobiose-specific EIIA component (116 aa).

Residues 11–109 (DDYMGVVMGI…AVEVVGQEQR (99 aa)) form the PTS EIIA type-3 domain. The Tele-phosphohistidine intermediate role is filled by histidine 85. Histidine 85 is subject to Phosphohistidine; by HPr. Aspartate 88 lines the Mg(2+) pocket.

As to quaternary structure, homotrimer. The cofactor is Mg(2+).

Its function is as follows. The phosphoenolpyruvate-dependent sugar phosphotransferase system (sugar PTS), a major carbohydrate active transport system, catalyzes the phosphorylation of incoming sugar substrates concomitantly with their translocation across the cell membrane. Involved in cellobiose transport with PtcB and CelB. This system can also transport lactose. In Lactococcus lactis subsp. lactis (strain IL1403) (Streptococcus lactis), this protein is PTS system cellobiose-specific EIIA component.